A 668-amino-acid chain; its full sequence is UvrABC system protein B (668 aa).

The region spanning D36–E276 is the Helicase ATP-binding domain. An ATP-binding site is contributed by G49–T56. The Beta-hairpin motif lies at Y102–V125. The region spanning Q440 to I606 is the Helicase C-terminal domain. Residues Q632 to M667 form the UVR domain.

Belongs to the UvrB family. Forms a heterotetramer with UvrA during the search for lesions. Interacts with UvrC in an incision complex.

Its subcellular location is the cytoplasm. In terms of biological role, the UvrABC repair system catalyzes the recognition and processing of DNA lesions. A damage recognition complex composed of 2 UvrA and 2 UvrB subunits scans DNA for abnormalities. Upon binding of the UvrA(2)B(2) complex to a putative damaged site, the DNA wraps around one UvrB monomer. DNA wrap is dependent on ATP binding by UvrB and probably causes local melting of the DNA helix, facilitating insertion of UvrB beta-hairpin between the DNA strands. Then UvrB probes one DNA strand for the presence of a lesion. If a lesion is found the UvrA subunits dissociate and the UvrB-DNA preincision complex is formed. This complex is subsequently bound by UvrC and the second UvrB is released. If no lesion is found, the DNA wraps around the other UvrB subunit that will check the other stand for damage. This is UvrABC system protein B from Streptococcus thermophilus (strain ATCC BAA-491 / LMD-9).